Here is a 380-residue protein sequence, read N- to C-terminus: Cytochrome b (380 aa).

Transmembrane regions (helical) follow at residues 33–53, 77–98, 113–133, and 178–198; these read FGSLLGLCLIIQILTGLFLAM, WLIRYMHANGASMFFICLFLHV, WNMGIVLLFAVMATAFMGYVL, and FFAFHFILPFIITALVLVHLL. Positions 83 and 97 each coordinate heme b. Heme b-binding residues include His-182 and His-196. His-201 is a binding site for a ubiquinone. 4 consecutive transmembrane segments (helical) span residues 226 to 246, 288 to 308, 320 to 340, and 347 to 367; these read IKDFLGVLILLMAFMILTLFF, LGGVLALILSIVILAFMPLLH, ITQTMYWILVADLLVLTWIGG, and FIIIGQTASIAYFAIIVILMP.

The protein belongs to the cytochrome b family. The cytochrome bc1 complex contains 11 subunits: 3 respiratory subunits (MT-CYB, CYC1 and UQCRFS1), 2 core proteins (UQCRC1 and UQCRC2) and 6 low-molecular weight proteins (UQCRH/QCR6, UQCRB/QCR7, UQCRQ/QCR8, UQCR10/QCR9, UQCR11/QCR10 and a cleavage product of UQCRFS1). This cytochrome bc1 complex then forms a dimer. It depends on heme b as a cofactor.

The protein localises to the mitochondrion inner membrane. In terms of biological role, component of the ubiquinol-cytochrome c reductase complex (complex III or cytochrome b-c1 complex) that is part of the mitochondrial respiratory chain. The b-c1 complex mediates electron transfer from ubiquinol to cytochrome c. Contributes to the generation of a proton gradient across the mitochondrial membrane that is then used for ATP synthesis. In Microtus guentheri (Gunther's vole), this protein is Cytochrome b (MT-CYB).